The following is a 376-amino-acid chain: Glycerol-3-phosphate acyltransferase 9 (376 aa).

Over 1-78 the chain is Cytoplasmic; it reads MSSTAGRLVT…SNPPEPWNWN (78 aa). Ser-13 carries the phosphoserine modification. 3 consecutive transmembrane segments (helical) span residues 79-99, 102-122, and 135-155; these read IYLF…LFPL, FTLA…NALL, and VLVE…VKYH. Topologically, residues 156 to 376 are cytoplasmic; the sequence is GPRPSIRPKQ…ESILARLEEK (221 aa). Residues 168 to 180 are catalytic; sequence VANHTSMIDFIVL. Positions 171–176 match the HXXXXD motif motif; the sequence is HTSMID. Residue 209-218 coordinates sn-glycerol 3-phosphate; sequence GCIWFNRSEA. The glycerol-3-phosphate binding stretch occupies residues 242–262; the sequence is IFPEGTCVNNNYTVMFKKGAF. Residues 266–275 form a catalytic region; it reads CTVCPIAIKY. The tract at residues 369–373 is endoplasmic reticulum targeting; sequence ILARL.

Belongs to the 1-acyl-sn-glycerol-3-phosphate acyltransferase family. As to quaternary structure, self-interacts. Interacts with LPAT2 and LPCAT2. As to expression, up-regulated during embryogenesis. Expressed in seedlings, leaves, stems, roots, floral buds, flowers, pollen, and siliques at various developmental stages.

It localises to the endoplasmic reticulum membrane. The catalysed reaction is sn-glycerol 3-phosphate + an acyl-CoA = a 1-acyl-sn-glycero-3-phosphate + CoA. It functions in the pathway glycerolipid metabolism; triacylglycerol biosynthesis. In terms of biological role, essential protein. Required for male and female gametophytes development. Exhibits sn-1 acyltransferase activity with high specificity for acyl-coenzyme A, thus triggering storage lipid biosynthesis and playing an important role in the Kennedy pathway of glycerolipid biosynthesis. Catalyzes triacylglycerol (TAG) accumulation involved in membrane lipid and oil biosynthesis, especially in seeds. Also contributes to the biosynthesis of both polar lipids and TAG in developing leaves, as well as lipid droplet production in developing pollen grains. Seems to not contribute to surface lipid biosynthesis (e.g. waxes and cutin). In Arabidopsis thaliana (Mouse-ear cress), this protein is Glycerol-3-phosphate acyltransferase 9.